Consider the following 710-residue polypeptide: Lactoperoxidase (710 aa).

A signal peptide spans 1 to 22; the sequence is MKVLLRLPALLASLTLLQMAAS. Residues 23–98 constitute a propeptide that is removed on maturation; the sequence is TRNATRTATI…WEQSLKRLRR (76 aa). N-linked (GlcNAc...) asparagine glycans are attached at residues Asn25, Asn104, and Asn131. Residues Cys130 and Cys143 are joined by a disulfide bond. Asp223 serves as a coordination point for heme b. The Proton acceptor role is filled by His224. Ca(2+) is bound at residue Asp225. N-linked (GlcNAc...) asparagine glycosylation occurs at Asn238. 2 disulfides stabilise this stretch: Cys244–Cys254 and Cys248–Cys272. Residues Thr299, Phe301, Asp303, and Ser305 each coordinate Ca(2+). Phosphoserine is present on Ser313. An N-linked (GlcNAc...) asparagine glycan is attached at Asn320. Residues Cys352 and Cys363 are joined by a disulfide bond. Residues Glu373 and His466 each contribute to the heme b site. The residue at position 480 (Tyr480) is a 3'-nitrotyrosine. 2 disulfides stabilise this stretch: Cys571–Cys628 and Cys669–Cys694.

The protein belongs to the peroxidase family. XPO subfamily. Ca(2+) is required as a cofactor. The cofactor is heme b. Expressed in the lacrimal gland with higher levels and 3-fold higher activity in adult females than males and secreted into tears (at protein level).

It is found in the secreted. It localises to the cytoplasm. The enzyme catalyses 2 a phenolic donor + H2O2 = 2 a phenolic radical donor + 2 H2O. It catalyses the reaction thiocyanate + H2O2 + H(+) = hypothiocyanous acid + H2O. The catalysed reaction is iodide + H2O2 = hypoiodite + H2O. Functionally, heme-containing oxidoreductase which catalyzes the conversion of thiocyanate (SCN(-)) into antimicrobial agent hypothiocyanous acid (OSCN(-)) in the presence of hydrogen peroxide (H2O2). Also involved in the conversion of iodide (I(-)) into hypoiodite (IO(-)) in the presence of H2O2. Responsible for the inactivation of a wide range of micro-organisms and hence, important component of defense mechanism. May be implicated in airway host defense against infection. May contribute to maintaining an appropriate H2O2 cellular level, therefore protecting cells from H2O2-caused injuries and inflammation. The polypeptide is Lactoperoxidase (LPO) (Mesocricetus auratus (Golden hamster)).